The primary structure comprises 158 residues: Transcription elongation factor GreA (158 aa).

It belongs to the GreA/GreB family.

Necessary for efficient RNA polymerase transcription elongation past template-encoded arresting sites. The arresting sites in DNA have the property of trapping a certain fraction of elongating RNA polymerases that pass through, resulting in locked ternary complexes. Cleavage of the nascent transcript by cleavage factors such as GreA or GreB allows the resumption of elongation from the new 3'terminus. GreA releases sequences of 2 to 3 nucleotides. In Wigglesworthia glossinidia brevipalpis, this protein is Transcription elongation factor GreA.